Reading from the N-terminus, the 284-residue chain is 4-hydroxybenzoate octaprenyltransferase (284 aa).

8 consecutive transmembrane segments (helical) span residues 16-36 (PIGILLLLWPTLWALWLASDG), 40-60 (WTLLAIFTLGTILMRSAGCAI), 91-111 (LLVALALALLSFALIWPLNTL), 132-152 (FFAIPQAYLGIAFGFGIPMGF), 157-177 (NTVPAAAWWLLVANVFWAVAY), 206-226 (VAAVMFCYAVTLGLIFIVGWQ), 231-251 (TWFAAGMLIATGCAIYHYTLI), and 259-279 (CFAAFRHNNWLGAAIFGGVVL).

It belongs to the UbiA prenyltransferase family. It depends on Mg(2+) as a cofactor.

Its subcellular location is the cell inner membrane. It carries out the reaction all-trans-octaprenyl diphosphate + 4-hydroxybenzoate = 4-hydroxy-3-(all-trans-octaprenyl)benzoate + diphosphate. Its pathway is cofactor biosynthesis; ubiquinone biosynthesis. In terms of biological role, catalyzes the prenylation of para-hydroxybenzoate (PHB) with an all-trans polyprenyl group. Mediates the second step in the final reaction sequence of ubiquinone-8 (UQ-8) biosynthesis, which is the condensation of the polyisoprenoid side chain with PHB, generating the first membrane-bound Q intermediate 3-octaprenyl-4-hydroxybenzoate. This chain is 4-hydroxybenzoate octaprenyltransferase, found in Herminiimonas arsenicoxydans.